Here is a 92-residue protein sequence, read N- to C-terminus: Small nuclear ribonucleoprotein E (92 aa).

A Sm domain is found at 18–92 (INLIFRYLQN…NITLLQSVSN (75 aa)).

Belongs to the snRNP Sm proteins family. In terms of assembly, core component of the spliceosomal U1, U2, U4 and U5 small nuclear ribonucleoproteins (snRNPs), the building blocks of the spliceosome. Most spliceosomal snRNPs contain a common set of Sm proteins, SNRPB, SNRPD1, SNRPD2, SNRPD3, SNRPE, SNRPF and SNRPG that assemble in a heptameric protein ring on the Sm site of the small nuclear RNA to form the core snRNP. Component of the U1 snRNP. The U1 snRNP is composed of the U1 snRNA and the 7 core Sm proteins SNRPB, SNRPD1, SNRPD2, SNRPD3, SNRPE, SNRPF and SNRPG, and at least three U1 snRNP-specific proteins SNRNP70/U1-70K, SNRPA/U1-A and SNRPC/U1-C. Component of the U4/U6-U5 tri-snRNP complex composed of the U4, U6 and U5 snRNAs and at least PRPF3, PRPF4, PRPF6, PRPF8, PRPF31, SNRNP200, TXNL4A, SNRNP40, SNRPB, SNRPD1, SNRPD2, SNRPD3, SNRPE, SNRPF, SNRPG, DDX23, CD2BP2, PPIH, SNU13, EFTUD2, SART1 and USP39, plus LSM2, LSM3, LSM4, LSM5, LSM6, LSM7 and LSM8. Component of the U7 snRNP complex, or U7 Sm protein core complex, that is composed of the U7 snRNA and at least LSM10, LSM11, SNRPB, SNRPD3, SNRPE, SNRPF and SNRPG; the complex does not contain SNRPD1 and SNRPD2. Component of the minor spliceosome, which splices U12-type introns. Part of the SMN-Sm complex that contains SMN1, GEMIN2/SIP1, DDX20/GEMIN3, GEMIN4, GEMIN5, GEMIN6, GEMIN7, GEMIN8, STRAP/UNRIP and the Sm proteins SNRPB, SNRPD1, SNRPD2, SNRPD3, SNRPE, SNRPF and SNRPG; catalyzes core snRNPs assembly. Forms a 6S pICln-Sm complex composed of CLNS1A/pICln, SNRPD1, SNRPD2, SNRPE, SNRPF and SNRPG; ring-like structure where CLNS1A/pICln mimics additional Sm proteins and which is unable to assemble into the core snRNP. Interacts with SMN1; the interaction is direct. Interacts with GEMIN2 (via N-terminus); the interaction is direct. Interacts with SNRPF; the interaction is direct. Interacts with SNRPG; the interaction is direct.

The protein resides in the cytoplasm. It is found in the cytosol. The protein localises to the nucleus. Functionally, plays a role in pre-mRNA splicing as a core component of the spliceosomal U1, U2, U4 and U5 small nuclear ribonucleoproteins (snRNPs), the building blocks of the spliceosome. Component of both the pre-catalytic spliceosome B complex and activated spliceosome C complexes. As a component of the minor spliceosome, involved in the splicing of U12-type introns in pre-mRNAs. As part of the U7 snRNP it is involved in histone 3'-end processing. This chain is Small nuclear ribonucleoprotein E (SNRPE), found in Sus scrofa (Pig).